We begin with the raw amino-acid sequence, 501 residues long: L-arabinose isomerase (501 aa).

The Mn(2+) site is built by E306, E333, H350, and H450.

The protein belongs to the arabinose isomerase family. Homohexamer. Mn(2+) is required as a cofactor.

It carries out the reaction beta-L-arabinopyranose = L-ribulose. It functions in the pathway carbohydrate degradation; L-arabinose degradation via L-ribulose; D-xylulose 5-phosphate from L-arabinose (bacterial route): step 1/3. Functionally, catalyzes the conversion of L-arabinose to L-ribulose. This is L-arabinose isomerase from Erwinia tasmaniensis (strain DSM 17950 / CFBP 7177 / CIP 109463 / NCPPB 4357 / Et1/99).